A 75-amino-acid polypeptide reads, in one-letter code: Caerin-1.1 (75 aa).

An N-terminal signal peptide occupies residues 1-22 (MASLKKSLFLVLLLGFVSVSIC). Positions 23–49 (EEEKRQEDEDEHEEEGESQEEGSEEKR) are excised as a propeptide. The interval 24-49 (EEKRQEDEDEHEEEGESQEEGSEEKR) is disordered. Positions 30-45 (DEDEHEEEGESQEEGS) are enriched in acidic residues. Leu74 bears the Leucine amide mark.

Belongs to the frog skin active peptide (FSAP) family. Caerin subfamily. In terms of processing, the major product is Caerin-1.1; in addition, different peptides are produced that are missing some amino acid residues at the N-terminus or C-terminus. Caerin-1.1.1 and Caerin-1.1.4 are inactive. Expressed by the skin parotoid and/or rostral glands.

The protein localises to the secreted. Antimicrobial peptide with antibacterial and antiviral activities. Adopts an alpha helical conformation which can disrupt bacterial membranes. Inhibits the formation of NO by neuronal nitric oxide synthase (nNOS) at micromolar concentrations. Acts by a non-competitive mechanism, probably by binding to calcium/calmodulin and as a consequence blocking calmodulin attachment to nNOS. Functionally, is inactive. In Ranoidea caerulea (Green tree frog), this protein is Caerin-1.1.